A 117-amino-acid polypeptide reads, in one-letter code: Photosystem II reaction center Psb28 protein (117 aa).

The protein belongs to the Psb28 family. As to quaternary structure, part of the photosystem II complex.

It localises to the cellular thylakoid membrane. The polypeptide is Photosystem II reaction center Psb28 protein (Prochlorococcus marinus (strain MIT 9515)).